The sequence spans 334 residues: Phenazine-1-carboxylate N-methyltransferase (334 aa).

The S-adenosyl-L-methionine site is built by Asp-198 and Arg-241.

The protein belongs to the class I-like SAM-binding methyltransferase superfamily. Cation-independent O-methyltransferase family. In terms of assembly, homodimer in solution. Probably interacts transiently with PhzS.

The enzyme catalyses phenazine-1-carboxylate + S-adenosyl-L-methionine = 5-methyl-phenazine-1-carboxylate + S-adenosyl-L-homocysteine. It functions in the pathway secondary metabolite biosynthesis; pyocyanine biosynthesis. Its activity is regulated as follows. In vitro, requires PhzS for activity. Involved in the biosynthesis of pyocyanine, a blue-pigmented phenazine derivative, which plays a role in virulence. Converts phenazine-1-carboxylate (PCA) to 5-methylphenazine-1-carboxylate (5-methyl-PCA). The chain is Phenazine-1-carboxylate N-methyltransferase from Pseudomonas aeruginosa (strain ATCC 15692 / DSM 22644 / CIP 104116 / JCM 14847 / LMG 12228 / 1C / PRS 101 / PAO1).